We begin with the raw amino-acid sequence, 257 residues long: Protein orai-2 (257 aa).

4 consecutive transmembrane segments (helical) span residues 62–79, 94–114, 156–176, and 201–221; these read ASSR…VAMV, LIAF…ALLI, LGIL…FLPI, and LVST…TIHF.

It belongs to the Orai family.

Its subcellular location is the membrane. Functionally, ca(2+) release-activated Ca(2+)-like (CRAC-like) channel subunit which mediates Ca(2+) influx and increase in Ca(2+)-selective current by synergy with the Ca(2+) sensor, stim1. In Xenopus laevis (African clawed frog), this protein is Protein orai-2 (orai2).